A 347-amino-acid chain; its full sequence is tRNA pseudouridine synthase D (347 aa).

Asp78 serves as the catalytic Nucleophile. The 155-residue stretch at 150-304 folds into the TRUD domain; the sequence is GLPNFFGPQR…AEGTRRAARL (155 aa).

It belongs to the pseudouridine synthase TruD family.

The catalysed reaction is uridine(13) in tRNA = pseudouridine(13) in tRNA. Responsible for synthesis of pseudouridine from uracil-13 in transfer RNAs. In Anaeromyxobacter dehalogenans (strain 2CP-C), this protein is tRNA pseudouridine synthase D.